A 526-amino-acid polypeptide reads, in one-letter code: Probable carboxypeptidase 2 (526 aa).

An N-terminal signal peptide occupies residues 1-21; it reads MVAYRLLALISLGLGSHCASA. Residue Asn46 is glycosylated (N-linked (GlcNAc...) asparagine). A disordered region spans residues 53 to 76; it reads PAFTSPGTVPRGFSDGTSGPTRDE. Positions 71 to 351 constitute a Peptidase M14 domain; the sequence is GPTRDETMEG…VMAKSILQTA (281 aa). A glycan (N-linked (GlcNAc...) asparagine) is linked at Asn116. 3 residues coordinate Zn(2+): His136, Glu139, and His224. Glu322 functions as the Proton donor/acceptor in the catalytic mechanism. N-linked (GlcNAc...) asparagine glycosylation is found at Asn393 and Asn459.

The protein belongs to the peptidase M14 family. Zn(2+) is required as a cofactor.

It is found in the secreted. Extracellular metalloprotease that contributes to pathogenicity. The sequence is that of Probable carboxypeptidase 2 (MCPB) from Arthroderma benhamiae (strain ATCC MYA-4681 / CBS 112371) (Trichophyton mentagrophytes).